The sequence spans 317 residues: tRNA-dihydrouridine(20a/20b) synthase [NAD(P)+]-like (317 aa).

FMN-binding positions include Pro-33 to Val-35 and Gln-87. The active-site Proton donor is the Cys-116. FMN-binding positions include Lys-158, His-186, Asn-216–Asp-218, and Ala-240–Arg-241.

It belongs to the Dus family. Dus4 subfamily. The cofactor is FMN.

It catalyses the reaction 5,6-dihydrouridine(20a) in tRNA + NADP(+) = uridine(20a) in tRNA + NADPH + H(+). The catalysed reaction is 5,6-dihydrouridine(20a) in tRNA + NAD(+) = uridine(20a) in tRNA + NADH + H(+). The enzyme catalyses 5,6-dihydrouridine(20b) in tRNA + NAD(+) = uridine(20b) in tRNA + NADH + H(+). It carries out the reaction 5,6-dihydrouridine(20b) in tRNA + NADP(+) = uridine(20b) in tRNA + NADPH + H(+). Functionally, catalyzes the synthesis of dihydrouridine, a modified base found in the D-loop of most tRNAs. In Homo sapiens (Human), this protein is tRNA-dihydrouridine(20a/20b) synthase [NAD(P)+]-like (DUS4L).